A 211-amino-acid polypeptide reads, in one-letter code: Thiamine-phosphate synthase (211 aa).

4-amino-2-methyl-5-(diphosphooxymethyl)pyrimidine is bound by residues 39 to 43 (QLREK) and N71. 2 residues coordinate Mg(2+): D72 and D91. S110 lines the 4-amino-2-methyl-5-(diphosphooxymethyl)pyrimidine pocket. 136–138 (TAT) is a 2-[(2R,5Z)-2-carboxy-4-methylthiazol-5(2H)-ylidene]ethyl phosphate binding site. Residue K139 coordinates 4-amino-2-methyl-5-(diphosphooxymethyl)pyrimidine. 2-[(2R,5Z)-2-carboxy-4-methylthiazol-5(2H)-ylidene]ethyl phosphate contacts are provided by residues A167 and 187–188 (VS).

Belongs to the thiamine-phosphate synthase family. Requires Mg(2+) as cofactor.

It carries out the reaction 2-[(2R,5Z)-2-carboxy-4-methylthiazol-5(2H)-ylidene]ethyl phosphate + 4-amino-2-methyl-5-(diphosphooxymethyl)pyrimidine + 2 H(+) = thiamine phosphate + CO2 + diphosphate. The enzyme catalyses 2-(2-carboxy-4-methylthiazol-5-yl)ethyl phosphate + 4-amino-2-methyl-5-(diphosphooxymethyl)pyrimidine + 2 H(+) = thiamine phosphate + CO2 + diphosphate. It catalyses the reaction 4-methyl-5-(2-phosphooxyethyl)-thiazole + 4-amino-2-methyl-5-(diphosphooxymethyl)pyrimidine + H(+) = thiamine phosphate + diphosphate. It functions in the pathway cofactor biosynthesis; thiamine diphosphate biosynthesis; thiamine phosphate from 4-amino-2-methyl-5-diphosphomethylpyrimidine and 4-methyl-5-(2-phosphoethyl)-thiazole: step 1/1. Its function is as follows. Condenses 4-methyl-5-(beta-hydroxyethyl)thiazole monophosphate (THZ-P) and 2-methyl-4-amino-5-hydroxymethyl pyrimidine pyrophosphate (HMP-PP) to form thiamine monophosphate (TMP). This is Thiamine-phosphate synthase from Solidesulfovibrio magneticus (strain ATCC 700980 / DSM 13731 / RS-1) (Desulfovibrio magneticus).